Here is a 410-residue protein sequence, read N- to C-terminus: 45 kDa immediate-early protein 2 (410 aa).

The tract at residues serine 36–glutamate 166 is disordered. Low complexity-rich tracts occupy residues arginine 47–threonine 67, serine 90–aspartate 101, and alanine 132–glycine 147. Residues valine 257–histidine 283 fold into a zinc finger.

In terms of biological role, activates the E1.7 promoter. This activation is augmented by the IE1 protein. It down-regulates the transcription of genes under the control of the major IE promoter. This chain is 45 kDa immediate-early protein 2 (UL122), found in Homo sapiens (Human).